Consider the following 41-residue polypeptide: Disintegrin viperistatin (41 aa).

4 disulfides stabilise this stretch: cysteine 1–cysteine 10, cysteine 6–cysteine 29, cysteine 7–cysteine 34, and cysteine 19–cysteine 36. The 41-residue stretch at 1–41 (CTTGPCCRQCKLKPAGTTCWKTSRTSHYCTGKSCDCPVYQG) folds into the Disintegrin domain. Residues 21-23 (KTS) carry the Cell attachment site; atypical (KTS) motif.

In terms of assembly, monomer. As to expression, expressed by the venom gland.

Its subcellular location is the secreted. Potent and highly selective inhibitor of alpha-1/beta-1 (ITGA1/ITGB1) integrin binding to collagen I and IV. Is about 25-fold more potent than obtustatin inhibiting the binding of this integrin to collagen IV. In Daboia palaestinae (Palestine viper), this protein is Disintegrin viperistatin.